We begin with the raw amino-acid sequence, 1356 residues long: Vascular endothelial growth factor receptor 2 (1356 aa).

The signal sequence occupies residues 1–19 (MQSKVLLAVALWLCVETRA). Residues 20 to 764 (ASVGLPSVSL…EGAQEKTNLE (745 aa)) lie on the Extracellular side of the membrane. 6 N-linked (GlcNAc...) asparagine glycosylation sites follow: Asn46, Asn66, Asn96, Asn143, Asn158, and Asn245. 7 Ig-like C2-type domains span residues 46-110 (NTTL…ETDL), 141-207 (NKNK…INDE), 224-320 (YDVV…KNST), 328-414 (PFVA…HVVS), 421-548 (PQIG…FHVT), 551-660 (PEIT…RQLT), and 667-753 (PTIT…AFFI). A disulfide bridge links Cys53 with Cys103. Cysteines 150 and 200 form a disulfide. Cysteines 246 and 307 form a disulfide. N-linked (GlcNAc...) asparagine glycans are attached at residues Asn318, Asn374, Asn395, Asn511, Asn523, Asn580, Asn613, Asn619, Asn631, Asn675, Asn704, and Asn721. 2 disulfide bridges follow: Cys445–Cys530 and Cys571–Cys642. A disulfide bond links Cys688 and Cys737. A helical transmembrane segment spans residues 765-785 (IIILVGTAVIAMFFWLLLVII). Residues 786–1356 (LRTVKRANGG…SGTTLSSPPV (571 aa)) are Cytoplasmic-facing. Position 801 is a phosphotyrosine (Tyr801). One can recognise a Protein kinase domain in the interval 834–1162 (LKLGKPLGRG…FSELVEHLGN (329 aa)). ATP contacts are provided by residues 840–848 (LGRGAFGQV) and Lys868. Tyr951 is modified (phosphotyrosine; by autocatalysis). 2 positions are modified to phosphoserine: Ser982 and Ser984. Tyr996 carries the post-translational modification Phosphotyrosine; by autocatalysis. Residues Cys1024 and Cys1045 are joined by a disulfide bond. Catalysis depends on Asp1028, which acts as the Proton acceptor. Tyr1054, Tyr1059, Tyr1175, and Tyr1214 each carry phosphotyrosine; by autocatalysis. Phosphoserine is present on residues Ser1231 and Ser1235. Position 1238 is a phosphothreonine (Thr1238). Residues 1274–1318 (DRTKLSPSFGGMVPSKSRESVASEGSNQTSGYQSGYHSDDTDTTV) form a disordered region. A compositionally biased stretch (polar residues) spans 1296-1309 (SEGSNQTSGYQSGY). 3 positions are modified to phosphotyrosine; by autocatalysis: Tyr1305, Tyr1309, and Tyr1319.

This sequence belongs to the protein kinase superfamily. Tyr protein kinase family. CSF-1/PDGF receptor subfamily. In terms of assembly, homodimer in the presence of bound dimeric VEGFA, VEGFC or VEGFD ligands; monomeric in the absence of bound ligands. Can also form heterodimers with FLT1/VEGFR1 and KDR/VEGFR2. Interacts (tyrosine phosphorylated) with LFYN, NCK1, PLCG1. Interacts (tyrosine-phosphorylated active form preferentially) with DAB2IP (via C2 domain and active form preferentially); the interaction occurs at the late phase of VEGFA response and inhibits KDR/VEGFR2 activity. Interacts with SHBSH2D2A/TSAD, GRB2, MYOF, CBL and PDCD6. Interacts (via C-terminus domain) with ERN1 (via kinase domain); the interaction is facilitated in a XBP1 isoform 1- and vascular endothelial growth factor (VEGF)-dependent manner in endothelial cells. Interacts (via juxtamembrane region) with chaperone PDCL3 (via thioredoxin fold region); the interaction leads to increased KDR/VEGFR2 abundance through inhibition of its ubiquitination and degradation. Interacts (tyrosine phosphorylated) with CCDC88A/GIV (via SH2-like region); binding requires autophosphorylation of the KDR/VEGFR2 C-terminal region. Interacts with isoform 2 of BSG. Interacts with SLC31A1; this interaction is induced upon VEGFA stimulation leading to SLC31A1 and KDR subsequent co-internalization to early endosomes, thereby activating KDR downstream signaling in endothelial cells. As to quaternary structure, (Microbial infection) Interacts with HIV-1 Tat. Post-translationally, N-glycosylated. Ubiquitinated. Tyrosine phosphorylation of the receptor promotes its poly-ubiquitination, leading to its degradation via the proteasome or lysosomal proteases. In terms of processing, autophosphorylated on tyrosine residues upon ligand binding. Autophosphorylation occurs in trans, i.e. one subunit of the dimeric receptor phosphorylates tyrosine residues on the other subunit. Phosphorylation at Tyr-951 is important for interaction with SH2D2A/TSAD and VEGFA-mediated reorganization of the actin cytoskeleton. Phosphorylation at Tyr-1175 is important for interaction with PLCG1 and SHB. Phosphorylation at Tyr-1214 is important for interaction with NCK1 and FYN. Dephosphorylated by PTPRB. Dephosphorylated by PTPRJ at Tyr-951, Tyr-996, Tyr-1054, Tyr-1059, Tyr-1175 and Tyr-1214. Post-translationally, the inhibitory disulfide bond between Cys-1024 and Cys-1045 may serve as a specific molecular switch for H(2)S-induced modification that regulates KDR/VEGFR2 function. Detected in cornea (at protein level). Widely expressed.

The protein resides in the cell junction. The protein localises to the endoplasmic reticulum. It localises to the cell membrane. Its subcellular location is the cytoplasm. It is found in the nucleus. The protein resides in the cytoplasmic vesicle. The protein localises to the early endosome. It localises to the secreted. The enzyme catalyses L-tyrosyl-[protein] + ATP = O-phospho-L-tyrosyl-[protein] + ADP + H(+). With respect to regulation, present in an inactive conformation in the absence of bound ligand. Binding of VEGFA, VEGFC or VEGFD leads to dimerization and activation by autophosphorylation on tyrosine residues. Inhibited by the small molecule PTK inhibitor SU5614 ((3Z)-5-Chloro-3-[(3,5-dimethyl-1H-pyrrol-2-yl)methylene]-1,3-dihydro-2H-indol-2-one). May be regulated by hydrogen sulfide (H(2)S) levels via a H(2)S-sensitive intracellular disulfide bond. Functionally, tyrosine-protein kinase that acts as a cell-surface receptor for VEGFA, VEGFC and VEGFD. Plays an essential role in the regulation of angiogenesis, vascular development, vascular permeability, and embryonic hematopoiesis. Promotes proliferation, survival, migration and differentiation of endothelial cells. Promotes reorganization of the actin cytoskeleton. Isoforms lacking a transmembrane domain, such as isoform 2 and isoform 3, may function as decoy receptors for VEGFA, VEGFC and/or VEGFD. Isoform 2 plays an important role as negative regulator of VEGFA- and VEGFC-mediated lymphangiogenesis by limiting the amount of free VEGFA and/or VEGFC and preventing their binding to FLT4. Modulates FLT1 and FLT4 signaling by forming heterodimers. Binding of vascular growth factors to isoform 1 leads to the activation of several signaling cascades. Activation of PLCG1 leads to the production of the cellular signaling molecules diacylglycerol and inositol 1,4,5-trisphosphate and the activation of protein kinase C. Mediates activation of MAPK1/ERK2, MAPK3/ERK1 and the MAP kinase signaling pathway, as well as of the AKT1 signaling pathway. Mediates phosphorylation of PIK3R1, the regulatory subunit of phosphatidylinositol 3-kinase, reorganization of the actin cytoskeleton and activation of PTK2/FAK1. Required for VEGFA-mediated induction of NOS2 and NOS3, leading to the production of the signaling molecule nitric oxide (NO) by endothelial cells. Phosphorylates PLCG1. Promotes phosphorylation of FYN, NCK1, NOS3, PIK3R1, PTK2/FAK1 and SRC. The chain is Vascular endothelial growth factor receptor 2 from Homo sapiens (Human).